We begin with the raw amino-acid sequence, 172 residues long: Shikimate kinase (172 aa).

ATP is bound at residue 17–22; it reads GTGKST. Ser21 lines the Mg(2+) pocket. Asp39, Arg63, and Gly84 together coordinate substrate. Position 122 (Arg122) interacts with ATP. Arg140 is a substrate binding site.

This sequence belongs to the shikimate kinase family. As to quaternary structure, monomer. Mg(2+) serves as cofactor.

The protein localises to the cytoplasm. It catalyses the reaction shikimate + ATP = 3-phosphoshikimate + ADP + H(+). It participates in metabolic intermediate biosynthesis; chorismate biosynthesis; chorismate from D-erythrose 4-phosphate and phosphoenolpyruvate: step 5/7. Catalyzes the specific phosphorylation of the 3-hydroxyl group of shikimic acid using ATP as a cosubstrate. In Staphylococcus haemolyticus (strain JCSC1435), this protein is Shikimate kinase.